We begin with the raw amino-acid sequence, 601 residues long: Glutamine--fructose-6-phosphate aminotransferase [isomerizing] (601 aa).

Residue Cys2 is the Nucleophile; for GATase activity of the active site. One can recognise a Glutamine amidotransferase type-2 domain in the interval Cys2–Asp218. 2 consecutive SIS domains span residues Ile284–Arg423 and Ile453–Pro591. Catalysis depends on Lys596, which acts as the For Fru-6P isomerization activity.

In terms of assembly, homodimer.

The protein resides in the cytoplasm. The catalysed reaction is D-fructose 6-phosphate + L-glutamine = D-glucosamine 6-phosphate + L-glutamate. Functionally, catalyzes the first step in hexosamine metabolism, converting fructose-6P into glucosamine-6P using glutamine as a nitrogen source. This chain is Glutamine--fructose-6-phosphate aminotransferase [isomerizing], found in Staphylococcus aureus (strain Mu50 / ATCC 700699).